The following is a 216-amino-acid chain: Octanoyltransferase (216 aa).

The 180-residue stretch at 32–211 (QEASEMLWFL…RFPYFLEALQ (180 aa)) folds into the BPL/LPL catalytic domain. Residues 71–78 (RGGRYTYH), 142–144 (AIG), and 155–157 (GFS) contribute to the substrate site. Catalysis depends on cysteine 173, which acts as the Acyl-thioester intermediate.

The protein belongs to the LipB family.

The protein localises to the cytoplasm. It carries out the reaction octanoyl-[ACP] + L-lysyl-[protein] = N(6)-octanoyl-L-lysyl-[protein] + holo-[ACP] + H(+). Its pathway is protein modification; protein lipoylation via endogenous pathway; protein N(6)-(lipoyl)lysine from octanoyl-[acyl-carrier-protein]: step 1/2. In terms of biological role, catalyzes the transfer of endogenously produced octanoic acid from octanoyl-acyl-carrier-protein onto the lipoyl domains of lipoate-dependent enzymes. Lipoyl-ACP can also act as a substrate although octanoyl-ACP is likely to be the physiological substrate. In Zymomonas mobilis subsp. mobilis (strain ATCC 31821 / ZM4 / CP4), this protein is Octanoyltransferase.